Reading from the N-terminus, the 638-residue chain is Sorting nexin-41 (638 aa).

Residues Met1 to Pro14 are compositionally biased toward low complexity. Positions Met1–Pro69 are disordered. Pro residues predominate over residues Pro15–Arg30. The PX domain occupies Gly84–Trp201. A 1,2-diacyl-sn-glycero-3-phospho-(1D-myo-inositol-3-phosphate)-binding residues include Arg118, Ser120, Lys144, and Arg168. 3 disordered regions span residues Lys215–Pro239, Leu408–Ala432, and Pro545–Leu638. Low complexity predominate over residues Pro225–Pro239. Residues Glu423–Ala432 are compositionally biased toward basic and acidic residues. Positions Gln552 to Ser562 are enriched in low complexity. The span at Met585 to Leu601 shows a compositional bias: basic and acidic residues.

It belongs to the sorting nexin family.

It is found in the endosome membrane. It localises to the endomembrane system. Functionally, may be required for cytoplasm to vacuole transport (Cvt) and pexophagy. This chain is Sorting nexin-41 (SNX41), found in Cryptococcus neoformans var. neoformans serotype D (strain JEC21 / ATCC MYA-565) (Filobasidiella neoformans).